The sequence spans 881 residues: Cell wall protein PRY3 (881 aa).

Residues 1–18 form the signal peptide; the sequence is MLEFPISVLLGCLVAVKA. Positions 30–144 constitute an SCP domain; it reads LNEHNKFRAL…TWNNYIVCSY (115 aa). N-linked (GlcNAc...) asparagine glycosylation occurs at Asn101. Residues 262–313 form a disordered region; sequence VVSSDATSSTTTTSSVATSSSTTSSDPTSSTAAASSSDPASSSAAASSSAST. Residue Asn360 is glycosylated (N-linked (GlcNAc...) asparagine). Disordered regions lie at residues 381–400 and 453–494; these read AADD…VSEH and VSST…NSAA. Residues 386 to 400 show a composition bias toward polar residues; it reads QGSTSKEATSSVSEH. N-linked (GlcNAc...) asparagine glycans are attached at residues Asn488, Asn535, Asn547, and Asn569. Residues 579-611 are disordered; it reads IDPTLDPTDNSASPTDNAKHTSTYGSSSTGASL. Residues 585 to 594 are compositionally biased toward polar residues; sequence PTDNSASPTD. Residues 599 to 611 show a composition bias toward low complexity; it reads TSTYGSSSTGASL. Asn625 is a glycosylation site (N-linked (GlcNAc...) asparagine). Disordered regions lie at residues 758-788 and 800-830; these read LASD…TTTT and PSST…MHQP. 2 stretches are compositionally biased toward low complexity: residues 776-788 and 808-820; these read STSN…TTTT and RTTT…STTS. Polar residues predominate over residues 821–830; that stretch reads QQDGSAMHQP. The GPI-anchor amidated glycine moiety is linked to residue Gly853. The propeptide at 854-881 is removed in mature form; sequence AATPLSIFQCNSLAGTIAAFVVAVLFAF.

This sequence belongs to the CRISP family. Post-translationally, the GPI-anchor is attached to the protein in the endoplasmic reticulum and serves to target the protein to the cell surface. There, the glucosamine-inositol phospholipid moiety is cleaved off and the GPI-modified mannoprotein is covalently attached via its lipidless GPI glycan remnant to the 1,6-beta-glucan of the outer cell wall layer.

Its subcellular location is the secreted. The protein resides in the cell wall. The protein localises to the membrane. In terms of biological role, the full-length isoform (isoform Long) is a daughter cell-specific cell wall protein required for efficient export of lipids such as acetylated sterols. Acts in detoxification of hydrophobic compounds. Involved in tolerance to organic solvents such as dimethyl sulfoxide (DMSO). Also plays a role as an inhibitor of mating. STE12 is utilized as a repressor of full-length PRY3 transcription, ensuring efficient mating. Functionally, there is no evidence that production of the short PRY3 transcript (isoform Short) is anything more than an adventitious by-product of the mechanism responsible for the repression of the full-length transcript. Moreover, no disadvantage is detectable for cells unable to make the short transcript. This Saccharomyces cerevisiae (strain ATCC 204508 / S288c) (Baker's yeast) protein is Cell wall protein PRY3 (PRY3).